Reading from the N-terminus, the 494-residue chain is WD repeat-containing protein 37 (494 aa).

Composition is skewed to polar residues over residues 1 to 13 and 22 to 31; these read MPTE…TARQ and SLSIRRTNSS. The segment at 1–50 is disordered; it reads MPTESASCSTARQTKQKRKSHSLSIRRTNSSEQERTGLPRDMLEGQDSKL. A compositionally biased stretch (basic and acidic residues) spans 32–47; sequence EQERTGLPRDMLEGQD. WD repeat units lie at residues 154 to 194 and 197 to 236; these read GHRD…CLVK and GHVG…PTPQ. The tract at residues 237 to 265 is disordered; sequence PVADTSISGEDEVECSDKDEPDLDGDVSS. Over residues 245–263 the composition is skewed to acidic residues; it reads GEDEVECSDKDEPDLDGDV. WD repeat units lie at residues 279–318, 321–360, 365–403, 406–445, and 452–493; these read SHQG…LVHS, GHDQ…IHSV, GHTD…SPIA, RTDS…LARL, and GHRR…LLQE.

In terms of assembly, forms homodimers. Interacts with PACS1. Interacts with PACS2.

It is found in the cytoplasm. The protein resides in the nucleus. Functionally, required for normal ER Ca2+ handling in lymphocytes. Together with PACS1, it plays an essential role in stabilizing peripheral lymphocyte populations. The polypeptide is WD repeat-containing protein 37 (WDR37) (Homo sapiens (Human)).